The chain runs to 130 residues: Holo-[acyl-carrier-protein] synthase (130 aa).

Mg(2+) contacts are provided by Asp9 and Glu58.

This sequence belongs to the P-Pant transferase superfamily. AcpS family. It depends on Mg(2+) as a cofactor.

It is found in the cytoplasm. It catalyses the reaction apo-[ACP] + CoA = holo-[ACP] + adenosine 3',5'-bisphosphate + H(+). In terms of biological role, transfers the 4'-phosphopantetheine moiety from coenzyme A to a Ser of acyl-carrier-protein. This is Holo-[acyl-carrier-protein] synthase from Mycobacterium tuberculosis (strain CDC 1551 / Oshkosh).